Consider the following 312-residue polypeptide: Zinc transporter ZitB (312 aa).

6 helical membrane passes run 16–36 (LLIA…GGWL), 40–60 (LALL…FIAL), 81–101 (LTTL…ILIV), 117–137 (TPML…FWIL), 153–173 (LHVL…IVIL), and 177–197 (WTPI…RSAW).

This sequence belongs to the cation diffusion facilitator (CDF) transporter (TC 2.A.4) family. SLC30A subfamily.

It localises to the cell inner membrane. Involved in zinc efflux across the cytoplasmic membrane, thus reducing zinc accumulation in the cytoplasm and rendering bacteria more resistant to zinc. It may contribute to zinc homeostasis at low concentrations of zinc. The sequence is that of Zinc transporter ZitB from Yersinia pestis.